Consider the following 239-residue polypeptide: Ribonuclease PH (239 aa).

Residues Arg-86 and 124-126 contribute to the phosphate site; that span reads GTR.

This sequence belongs to the RNase PH family. As to quaternary structure, homohexameric ring arranged as a trimer of dimers.

It carries out the reaction tRNA(n+1) + phosphate = tRNA(n) + a ribonucleoside 5'-diphosphate. In terms of biological role, phosphorolytic 3'-5' exoribonuclease that plays an important role in tRNA 3'-end maturation. Removes nucleotide residues following the 3'-CCA terminus of tRNAs; can also add nucleotides to the ends of RNA molecules by using nucleoside diphosphates as substrates, but this may not be physiologically important. Probably plays a role in initiation of 16S rRNA degradation (leading to ribosome degradation) during starvation. This is Ribonuclease PH from Rickettsia bellii (strain RML369-C).